The chain runs to 814 residues: Echinoderm microtubule-associated protein-like 1 (814 aa).

A coiled-coil region spans residues 31–72; that stretch reads SMEVSDRIASLEQRVQMQEDDIQLLKSALADVVRRLNITEEQ. The disordered stretch occupies residues 77–180; that stretch reads NRKGPTKARP…ESKPKEPAFS (104 aa). The segment covering 92–101 has biased composition (polar residues); it reads PLRTTVNNGT. Low complexity predominate over residues 103 to 115; it reads LPKKPSASLPAPS. Positions 127–137 are enriched in polar residues; that stretch reads KSINRTSSSER. The span at 142–152 shows a compositional bias: basic and acidic residues; that stretch reads GRRESSGDSKG. Residues 155-167 are compositionally biased toward low complexity; that stretch reads NRTGSTSSSSSGK. Positions 175–814 are tandem atypical propeller in EMLs; it reads KEPAFSPEEG…DTSIMQWRVI (640 aa). 12 WD repeats span residues 260-309, 314-357, 362-399, 408-445, 449-488, 492-529, 534-571, 577-612, 616-654, 663-700, 708-767, and 774-813; these read EQLQ…IWDS, TLHV…VWDW, RLAD…FWTL, QGLF…VWGK, RISY…SWNG, KLHK…LQGT, FTPI…LWDA, VWDK…VFDT, DLVT…IYGV, RVGK…YWVP, SVET…LFSY, and APSH…QWRV.

The protein belongs to the WD repeat EMAP family. Homotrimer; self-association is mediated by the N-terminal coiled coil. Does not interact with EML3. Binds unpolymerized tubulins via its WD repeat region. Binds repolymerizing microtubules. Interacts with TASOR. In terms of tissue distribution, detected in adult brain cortex, hippocampus and thalamus. Expressed in the stomach, lungs and in Sertoli cells of the testis.

The protein localises to the cytoplasm. Its subcellular location is the perinuclear region. It is found in the cytoskeleton. Its function is as follows. Modulates the assembly and organization of the microtubule cytoskeleton, and probably plays a role in regulating the orientation of the mitotic spindle and the orientation of the plane of cell division. Required for normal proliferation of neuronal progenitor cells in the developing brain and for normal brain development. Does not affect neuron migration per se. The chain is Echinoderm microtubule-associated protein-like 1 (Eml1) from Mus musculus (Mouse).